Reading from the N-terminus, the 154-residue chain is Egg-lysin (154 aa).

Residues 1–18 (MKLFVLCIFAMMATLAMS) form the signal peptide.

Homodimer. In terms of tissue distribution, sperm.

In terms of biological role, dissolves the egg vitelline layer nonenzymatically during fertilization. It creates a hole of about 3 mu-m in diameter through which the sperm pass. The sequence is that of Egg-lysin from Haliotis kamtschatkana (Pinto abalone).